The primary structure comprises 131 residues: Profilin-10 (131 aa).

A disulfide bridge links Cys-13 with Cys-115. The Involved in PIP2 interaction motif lies at 81 to 97 (AVIRGKKGSGGITVKKT). Thr-111 is modified (phosphothreonine).

This sequence belongs to the profilin family. As to quaternary structure, occurs in many kinds of cells as a complex with monomeric actin in a 1:1 ratio. Post-translationally, phosphorylated by MAP kinases.

Its subcellular location is the cytoplasm. The protein resides in the cytoskeleton. In terms of biological role, binds to actin and affects the structure of the cytoskeleton. At high concentrations, profilin prevents the polymerization of actin, whereas it enhances it at low concentrations. The protein is Profilin-10 of Zea mays (Maize).